A 358-amino-acid polypeptide reads, in one-letter code: Peptide chain release factor 1 (358 aa).

An N5-methylglutamine modification is found at Gln233.

The protein belongs to the prokaryotic/mitochondrial release factor family. Post-translationally, methylated by PrmC. Methylation increases the termination efficiency of RF1.

Its subcellular location is the cytoplasm. Functionally, peptide chain release factor 1 directs the termination of translation in response to the peptide chain termination codons UAG and UAA. The protein is Peptide chain release factor 1 of Flavobacterium johnsoniae (strain ATCC 17061 / DSM 2064 / JCM 8514 / BCRC 14874 / CCUG 350202 / NBRC 14942 / NCIMB 11054 / UW101) (Cytophaga johnsonae).